A 166-amino-acid polypeptide reads, in one-letter code: Small ribosomal subunit protein uS5 (166 aa).

Residues 11-74 (FLEKLIAVNR…EKARRNMVDV (64 aa)) form the S5 DRBM domain.

Belongs to the universal ribosomal protein uS5 family. As to quaternary structure, part of the 30S ribosomal subunit. Contacts proteins S4 and S8.

In terms of biological role, with S4 and S12 plays an important role in translational accuracy. Located at the back of the 30S subunit body where it stabilizes the conformation of the head with respect to the body. This Alteromonas mediterranea (strain DSM 17117 / CIP 110805 / LMG 28347 / Deep ecotype) protein is Small ribosomal subunit protein uS5.